Reading from the N-terminus, the 275-residue chain is Nitrogenase iron protein (275 aa).

9-16 serves as a coordination point for ATP; the sequence is GKGGIGKS. [4Fe-4S] cluster is bound at residue Cys-97. ADP-ribosylarginine; by dinitrogenase reductase ADP-ribosyltransferase is present on Arg-100. A [4Fe-4S] cluster-binding site is contributed by Cys-132.

Belongs to the NifH/BchL/ChlL family. In terms of assembly, homodimer. Requires [4Fe-4S] cluster as cofactor. Post-translationally, the reversible ADP-ribosylation of Arg-100 inactivates the nitrogenase reductase and regulates nitrogenase activity.

The enzyme catalyses N2 + 8 reduced [2Fe-2S]-[ferredoxin] + 16 ATP + 16 H2O = H2 + 8 oxidized [2Fe-2S]-[ferredoxin] + 2 NH4(+) + 16 ADP + 16 phosphate + 6 H(+). In terms of biological role, the key enzymatic reactions in nitrogen fixation are catalyzed by the nitrogenase complex, which has 2 components: the iron protein and the molybdenum-iron protein. This is Nitrogenase iron protein (nifH) from Methanococcus maripaludis (Methanococcus deltae).